The chain runs to 540 residues: Chaperonin GroEL 2 (540 aa).

ATP-binding positions include 30–33, Lys-51, 87–91, Gly-415, 480–482, and Asp-496; these read TLGP, DGTTT, and NAL.

Belongs to the chaperonin (HSP60) family. Forms a cylinder of 14 subunits composed of two heptameric rings stacked back-to-back. Interacts with the co-chaperonin GroES.

The protein resides in the cytoplasm. The catalysed reaction is ATP + H2O + a folded polypeptide = ADP + phosphate + an unfolded polypeptide.. Together with its co-chaperonin GroES, plays an essential role in assisting protein folding. The GroEL-GroES system forms a nano-cage that allows encapsulation of the non-native substrate proteins and provides a physical environment optimized to promote and accelerate protein folding. The chain is Chaperonin GroEL 2 from Protochlamydia amoebophila (strain UWE25).